Here is an 84-residue protein sequence, read N- to C-terminus: Sulfur carrier protein TusA (84 aa).

The Cysteine persulfide intermediate role is filled by cysteine 19.

This sequence belongs to the sulfur carrier protein TusA family. As to quaternary structure, interacts with IscS.

The protein localises to the cytoplasm. It participates in tRNA modification. Sulfur carrier protein involved in sulfur trafficking in the cell. Part of a sulfur-relay system required for 2-thiolation during synthesis of 2-thiouridine of the modified wobble base 5-methylaminomethyl-2-thiouridine (mnm(5)s(2)U) in tRNA. Interacts with IscS and stimulates its cysteine desulfurase activity. Accepts an activated sulfur from IscS, which is then transferred to TusD, and thus determines the direction of sulfur flow from IscS to 2-thiouridine formation. Also appears to be involved in sulfur transfer for the biosynthesis of molybdopterin. This Proteus mirabilis (strain HI4320) protein is Sulfur carrier protein TusA.